The primary structure comprises 171 residues: 3-hydroxydecanoyl-[acyl-carrier-protein] dehydratase (171 aa).

Residue histidine 70 is part of the active site.

The protein belongs to the thioester dehydratase family. FabA subfamily. Homodimer.

It is found in the cytoplasm. The catalysed reaction is a (3R)-hydroxyacyl-[ACP] = a (2E)-enoyl-[ACP] + H2O. It catalyses the reaction (3R)-hydroxydecanoyl-[ACP] = (2E)-decenoyl-[ACP] + H2O. The enzyme catalyses (2E)-decenoyl-[ACP] = (3Z)-decenoyl-[ACP]. Its pathway is lipid metabolism; fatty acid biosynthesis. Necessary for the introduction of cis unsaturation into fatty acids. Catalyzes the dehydration of (3R)-3-hydroxydecanoyl-ACP to E-(2)-decenoyl-ACP and then its isomerization to Z-(3)-decenoyl-ACP. Can catalyze the dehydratase reaction for beta-hydroxyacyl-ACPs with saturated chain lengths up to 16:0, being most active on intermediate chain length. The polypeptide is 3-hydroxydecanoyl-[acyl-carrier-protein] dehydratase (Marinomonas sp. (strain MWYL1)).